Consider the following 403-residue polypeptide: Chaperone protein DnaJ (403 aa).

Positions 4–69 constitute a J domain; it reads DYYEILGVAR…DKRRRYDQFG (66 aa). The CR-type zinc-finger motif lies at 159 to 240; the sequence is GVEKTIKIKK…CYGEGIKQGE (82 aa). Zn(2+) contacts are provided by Cys-172, Cys-175, Cys-188, Cys-191, Cys-214, Cys-217, Cys-228, and Cys-231. 4 CXXCXGXG motif repeats span residues 172-179, 188-195, 214-221, and 228-235; these read CRECNGTG, CPTCHGSG, CPTCGGEG, and CPSCYGEG.

Belongs to the DnaJ family. Homodimer. It depends on Zn(2+) as a cofactor.

The protein resides in the cytoplasm. In terms of biological role, participates actively in the response to hyperosmotic and heat shock by preventing the aggregation of stress-denatured proteins and by disaggregating proteins, also in an autonomous, DnaK-independent fashion. Unfolded proteins bind initially to DnaJ; upon interaction with the DnaJ-bound protein, DnaK hydrolyzes its bound ATP, resulting in the formation of a stable complex. GrpE releases ADP from DnaK; ATP binding to DnaK triggers the release of the substrate protein, thus completing the reaction cycle. Several rounds of ATP-dependent interactions between DnaJ, DnaK and GrpE are required for fully efficient folding. Also involved, together with DnaK and GrpE, in the DNA replication of plasmids through activation of initiation proteins. The sequence is that of Chaperone protein DnaJ from Chlorobaculum tepidum (strain ATCC 49652 / DSM 12025 / NBRC 103806 / TLS) (Chlorobium tepidum).